The following is a 674-amino-acid chain: Sterile alpha motif domain-containing protein 15 (674 aa).

Positions 1–18 (MAEVPEDYDSGPDEDGEL) are enriched in acidic residues. A disordered region spans residues 1–448 (MAEVPEDYDS…LEHREPKRGK (448 aa)). Basic and acidic residues-rich tracts occupy residues 87-142 (IAKE…EEAK), 195-223 (ESLR…KLGE), and 236-274 (TKPE…KSSE). Residues 276-290 (AGLEPPEETQPEVPE) show a composition bias toward acidic residues. Composition is skewed to basic and acidic residues over residues 291-322 (EMQR…KSTD), 330-346 (EEIK…KTNE), 354-372 (EMMK…EKKN), and 391-429 (VEEK…EPIK). In terms of domain architecture, SAM spans 545 to 608 (WDPEEVAEWI…SRHTQELLEI (64 aa)).

This chain is Sterile alpha motif domain-containing protein 15 (SAMD15), found in Homo sapiens (Human).